Consider the following 733-residue polypeptide: Probable Rho-GTPase-activating protein 6 (733 aa).

Residues 116-125 (VFNESKSSSP) show a composition bias toward polar residues. A disordered region spans residues 116–135 (VFNESKSSSPPDAHTDKYFT). Thr141 is subject to Phosphothreonine. Positions 174–256 (RFDKPSNNGP…SKGSWSSILR (83 aa)) are disordered. Low complexity predominate over residues 179–195 (SNNGPLGRSSLNLSSLS). 2 stretches are compositionally biased toward polar residues: residues 196 to 218 (HELQTSQDSPSLSATNQLSSSDT) and 225 to 240 (PPSSFGSQRQFNASQD). Residues 312–546 (TNLCKFTFPT…GLIIHWPEVL (235 aa)) form the Rho-GAP domain. The disordered stretch occupies residues 692–713 (PVTVTASSETNKKSQKINKKAS). A compositionally biased stretch (basic residues) spans 704–713 (KSQKINKKAS).

The polypeptide is Probable Rho-GTPase-activating protein 6 (rga6) (Schizosaccharomyces pombe (strain 972 / ATCC 24843) (Fission yeast)).